A 292-amino-acid polypeptide reads, in one-letter code: MAAAAAAAVAGVGRGGGGAEPRQERSRARGWAGVERSEGRRMEPGEELEEEGSPGGREDGFTAEHLAAEAMAADMDPWLVFDARTTPATELDAWLAKYPPSQVTRYGDPGSPNSEPVGWIAVYGQGYSPNSGDVQGLQAAWEALQTSGRPITPGTLRQLAITHHVLSGKWLMHLAPGFKLDHAWAGIARAVVEGQLQVAKVSPRAKEGGRQVICVYTDDFTDRLGVLEADSAIRAAGIKCLLTYKPDVYTYLGIYRANRWHLCPTLYESRFQLGGSARGSRVLDRANNVELT.

A compositionally biased stretch (low complexity) spans 1 to 11 (MAAAAAAAVAG). Residues 1-60 (MAAAAAAAVAGVGRGGGGAEPRQERSRARGWAGVERSEGRRMEPGEELEEEGSPGGREDG) are disordered. Arginine 29 is subject to Omega-N-methylarginine. Residues 35-44 (ERSEGRRMEP) are compositionally biased toward basic and acidic residues.

It belongs to the UPF0696 family.

The chain is UPF0696 protein C11orf68 (C11orf68) from Homo sapiens (Human).